The following is a 231-amino-acid chain: CD302 antigen (231 aa).

The N-terminal stretch at 1 to 21 is a signal peptide; it reads MSAAVVATLPTLLLLLGLAAA. Over 22–169 the chain is Extracellular; sequence DCPSSSWVQF…YEKKYLPDHH (148 aa). In terms of domain architecture, C-type lectin spans 31–153; it reads FQSNCYIFLQ…CEVSSVEGAL (123 aa). A glycan (N-linked (GlcNAc...) asparagine) is linked at Asn-110. A disulfide bond links Cys-129 and Cys-144. Residues 170–190 traverse the membrane as a helical segment; that stretch reads ILITALVIASTTILTITGAVV. At 191 to 231 the chain is on the cytoplasmic side; sequence WFLYKRNLTSGLTNTAYTTAPQLPYNDDCILVDAEENEYVA.

It localises to the membrane. Its subcellular location is the cell projection. The protein localises to the filopodium. The protein resides in the cytoplasm. It is found in the cell cortex. It localises to the microvillus. Functionally, potential multifunctional C-type lectin receptor that may play roles in endocytosis and phagocytosis as well as in cell adhesion and migration. The protein is CD302 antigen of Trichosurus vulpecula (Brush-tailed possum).